Consider the following 663-residue polypeptide: DNA ligase (663 aa).

NAD(+) is bound by residues 33–37 (DYSYD), 82–83 (SI), and Glu-112. The active-site N6-AMP-lysine intermediate is the Lys-114. Positions 135, 171, 285, and 309 each coordinate NAD(+). Zn(2+)-binding residues include Cys-403, Cys-406, Cys-419, and Cys-424. Residues 581–663 (DKEAPLQGKV…LRILDAKSVS (83 aa)) form the BRCT domain.

Belongs to the NAD-dependent DNA ligase family. LigA subfamily. Requires Mg(2+) as cofactor. Mn(2+) serves as cofactor.

It carries out the reaction NAD(+) + (deoxyribonucleotide)n-3'-hydroxyl + 5'-phospho-(deoxyribonucleotide)m = (deoxyribonucleotide)n+m + AMP + beta-nicotinamide D-nucleotide.. Its function is as follows. DNA ligase that catalyzes the formation of phosphodiester linkages between 5'-phosphoryl and 3'-hydroxyl groups in double-stranded DNA using NAD as a coenzyme and as the energy source for the reaction. It is essential for DNA replication and repair of damaged DNA. The sequence is that of DNA ligase from Chlamydia trachomatis serovar A (strain ATCC VR-571B / DSM 19440 / HAR-13).